We begin with the raw amino-acid sequence, 1086 residues long: Sterol regulatory element-binding protein cleavage-activating protein (1086 aa).

The Cytoplasmic portion of the chain corresponds to 1–35; that stretch reads MRIFTLGKGRISRGYARQVNPSLFAKYSYCIANNP. Residues 36 to 56 traverse the membrane as a helical segment; the sequence is WYFILVFTLLSITGIYSSLVA. Topologically, residues 57 to 229 are lumenal; the sequence is YQQSLYDQSL…TVVARIPDLT (173 aa). Residues Asn-94 and Asn-168 are each glycosylated (N-linked (GlcNAc...) asparagine). A helical transmembrane segment spans residues 230 to 250; it reads VIYRWYLWVGFGVGLFAYLYL. The 159-residue stretch at 233–391 folds into the SSD domain; sequence RWYLWVGFGV…GSFFLAVLSV (159 aa). Residues 251–265 lie on the Cytoplasmic side of the membrane; that stretch reads SLVRLHDIRAKFGLT. A helical transmembrane segment spans residues 266-286; it reads ATIFIQSGTAYFSTCSLLYFF. The Lumenal portion of the chain corresponds to 287–290; it reads ERTG. Residues 291-311 traverse the membrane as a helical segment; the sequence is PICPWPMAYYIIIFMDIENSF. The Cytoplasmic segment spans residues 312–337; sequence RLLRAVIASPQTKRVPSRIMEGFSST. The helical transmembrane segment at 338–358 threads the bilayer; sequence IIASFSSLLKKLLTLFVLSFF. The Lumenal portion of the chain corresponds to 359–367; sequence VYPLVQEFC. A helical membrane pass occupies residues 368 to 388; that stretch reads LFLACSFVVSFLLHGSFFLAV. At 389–422 the chain is on the cytoplasmic side; it reads LSVDIRRLELQDFLDSNSSNRNSKWWVPYLEYVR. The short motif at 396-401 is the ER export signal element; that stretch reads LELQDF. A helical transmembrane segment spans residues 423 to 443; sequence FMWSPWIIDNLGTVSFHMYVI. Topologically, residues 444–544 are lumenal; that stretch reads YLQLQSSTDI…FHDRRVWRWS (101 aa). Residue Asn-454 is glycosylated (N-linked (GlcNAc...) asparagine). Residues 545-565 traverse the membrane as a helical segment; the sequence is TFFSILFAIDFAVGLLVKALL. The Cytoplasmic segment spans residues 566-1086; that stretch reads RGWSDHDELS…QRKRSGTIGC (521 aa). 5 WD repeats span residues 593 to 632, 637 to 675, 680 to 727, 736 to 776, and 963 to 1009; these read HHQL…TKLV, QMPR…LMLQ, CKPN…EGAD, LSSP…WSPK, and GHYN…KKHR. Positions 640 to 1086 are interaction with sre1; it reads RTLKAIALDP…QRKRSGTIGC (447 aa).

This sequence belongs to the WD repeat SCAP family. In terms of assembly, forms a tight complex with scp1, composed of 4 copies of scp1 and 4 copies of sre1.

It localises to the endoplasmic reticulum membrane. The protein localises to the golgi apparatus membrane. Escort protein required for sre1 processing at low sterol as well as oxygen levels. May regulate export of the scp1/sre1 complex from the ER at low sterol or oxygen levels. 4-methyl sterols bound to scp1 may mask an ER export signal in scp1 leading to retention of the complex in the ER. Release of 4-methyl sterols may trigger a conformational change in the SSD domain of scp1 unmasking the ER export signal leading to recruitment into COPII-coated vesicles, transport to the Golgi complex, proteolytic cleavage of sre1 in the Golgi, release of the transcription factor fragment of sre1 from the membrane, its import into the nucleus and up-regulation of genes required for ergosterol biosynthesis as well as anaerobic growth. Binds 4-methyl sterols. The sequence is that of Sterol regulatory element-binding protein cleavage-activating protein from Schizosaccharomyces pombe (strain 972 / ATCC 24843) (Fission yeast).